Reading from the N-terminus, the 259-residue chain is Major cell-binding factor (259 aa).

Residues 1–26 (MVFRKSLLKLAVFALGACVAFSNANA) form the signal peptide.

Belongs to the bacterial solute-binding protein 3 family.

The protein localises to the cell surface. In terms of biological role, common antigen and a major cell adherence molecule. Most probably involved, with PEB1C, in a binding-protein-dependent transport system for an amino acid. May be involved in binding to intestinal cells. The polypeptide is Major cell-binding factor (peb1A) (Campylobacter jejuni subsp. jejuni serotype O:23/36 (strain 81-176)).